A 416-amino-acid chain; its full sequence is Tyrosine--tRNA ligase (416 aa).

Tyr40 lines the L-tyrosine pocket. The 'HIGH' region motif lies at 45 to 54 (ATAKSLHVGS). 2 residues coordinate L-tyrosine: Tyr177 and Gln181. The 'KMSKS' region signature appears at 237-241 (KMGKS). Lys240 contributes to the ATP binding site. One can recognise an S4 RNA-binding domain in the interval 351-415 (ISIVQLIVKS…GKKRHAMVQL (65 aa)).

It belongs to the class-I aminoacyl-tRNA synthetase family. TyrS type 1 subfamily. As to quaternary structure, homodimer.

The protein localises to the cytoplasm. The catalysed reaction is tRNA(Tyr) + L-tyrosine + ATP = L-tyrosyl-tRNA(Tyr) + AMP + diphosphate + H(+). Functionally, catalyzes the attachment of tyrosine to tRNA(Tyr) in a two-step reaction: tyrosine is first activated by ATP to form Tyr-AMP and then transferred to the acceptor end of tRNA(Tyr). The chain is Tyrosine--tRNA ligase from Roseobacter denitrificans (strain ATCC 33942 / OCh 114) (Erythrobacter sp. (strain OCh 114)).